The primary structure comprises 367 residues: Fructose-1,6-bisphosphatase class 1 3 (367 aa).

This sequence belongs to the FBPase class 1 family. As to quaternary structure, homotetramer.

The protein resides in the cytoplasm. The catalysed reaction is beta-D-fructose 1,6-bisphosphate + H2O = beta-D-fructose 6-phosphate + phosphate. It functions in the pathway carbohydrate biosynthesis; gluconeogenesis. This is Fructose-1,6-bisphosphatase class 1 3 from Paraburkholderia phymatum (strain DSM 17167 / CIP 108236 / LMG 21445 / STM815) (Burkholderia phymatum).